The chain runs to 237 residues: Lipoprotein-releasing system ATP-binding protein LolD (237 aa).

An ABC transporter domain is found at 16–237; sequence LKCEGLTRIY…LDQGRLSEDA (222 aa). 52–59 is an ATP binding site; it reads GSSGSGKT.

This sequence belongs to the ABC transporter superfamily. Lipoprotein translocase (TC 3.A.1.125) family. The complex is composed of two ATP-binding proteins (LolD) and two transmembrane proteins (LolC and LolE).

Its subcellular location is the cell inner membrane. In terms of biological role, part of the ABC transporter complex LolCDE involved in the translocation of mature outer membrane-directed lipoproteins, from the inner membrane to the periplasmic chaperone, LolA. Responsible for the formation of the LolA-lipoprotein complex in an ATP-dependent manner. In Chromohalobacter salexigens (strain ATCC BAA-138 / DSM 3043 / CIP 106854 / NCIMB 13768 / 1H11), this protein is Lipoprotein-releasing system ATP-binding protein LolD.